A 103-amino-acid polypeptide reads, in one-letter code: Small ribosomal subunit protein uS10 (103 aa).

It belongs to the universal ribosomal protein uS10 family. As to quaternary structure, part of the 30S ribosomal subunit.

Its function is as follows. Involved in the binding of tRNA to the ribosomes. This Marinomonas sp. (strain MWYL1) protein is Small ribosomal subunit protein uS10.